Here is a 409-residue protein sequence, read N- to C-terminus: Divalent metal cation transporter MntH (409 aa).

Transmembrane regions (helical) follow at residues 19-39, 46-66, 98-118, 122-142, 155-175, 196-216, 241-261, 290-310, 320-340, 348-368, and 388-408; these read LSLM…GNFA, ASFG…AMLI, WVQA…GAAI, LLLG…TFLI, LVIG…LVFS, AVFL…IYLH, IAMT…AAAF, IFGL…TLAG, FYIP…IVIL, ILVM…VPLL, and ILGK…LVSL.

The protein belongs to the NRAMP family.

Its subcellular location is the cell inner membrane. H(+)-stimulated, divalent metal cation uptake system. This Yersinia enterocolitica serotype O:8 / biotype 1B (strain NCTC 13174 / 8081) protein is Divalent metal cation transporter MntH.